A 135-amino-acid polypeptide reads, in one-letter code: ATP synthase epsilon chain (135 aa).

The protein belongs to the ATPase epsilon chain family. As to quaternary structure, F-type ATPases have 2 components, CF(1) - the catalytic core - and CF(0) - the membrane proton channel. CF(1) has five subunits: alpha(3), beta(3), gamma(1), delta(1), epsilon(1). CF(0) has three main subunits: a, b and c.

It is found in the cell inner membrane. Its function is as follows. Produces ATP from ADP in the presence of a proton gradient across the membrane. The chain is ATP synthase epsilon chain from Mesorhizobium japonicum (strain LMG 29417 / CECT 9101 / MAFF 303099) (Mesorhizobium loti (strain MAFF 303099)).